The chain runs to 526 residues: ATP synthase subunit alpha (526 aa).

171 to 178 (GDRQTGKT) is an ATP binding site.

Belongs to the ATPase alpha/beta chains family. In terms of assembly, F-type ATPases have 2 components, CF(1) - the catalytic core - and CF(0) - the membrane proton channel. CF(1) has five subunits: alpha(3), beta(3), gamma(1), delta(1), epsilon(1). CF(0) has four main subunits: a(1), b(1), b'(1) and c(9-12).

The protein localises to the cell inner membrane. It carries out the reaction ATP + H2O + 4 H(+)(in) = ADP + phosphate + 5 H(+)(out). Functionally, produces ATP from ADP in the presence of a proton gradient across the membrane. The alpha chain is a regulatory subunit. The protein is ATP synthase subunit alpha of Chlorobium chlorochromatii (strain CaD3).